Here is a 282-residue protein sequence, read N- to C-terminus: ESX-1 secretion-associated protein EspG1 (282 aa).

The protein belongs to the EspG family. Interacts specifically with ESX-1-dependent PE/PPE proteins.

It is found in the cytoplasm. Its function is as follows. Part of the ESX-1 / type VII specialized secretion system (T7SS), which exports several proteins including EsxA and EsxB. Specific chaperone for cognate PE/PPE proteins, plays an important role in preventing aggregation of PE/PPE dimers. Also plays a role in DNA conjugation, in at least recipient strain. This is ESX-1 secretion-associated protein EspG1 from Mycolicibacterium smegmatis (strain ATCC 700084 / mc(2)155) (Mycobacterium smegmatis).